Reading from the N-terminus, the 359-residue chain is Protein mab-21-like 2 (359 aa).

This sequence belongs to the mab-21 family. In terms of tissue distribution, expressed in the adult cerebellum and eye, with lower levels in the adult forebrain. In embryos at 10.5 days post-coitum strongly expressed in the rostral and distal regions of the developing neural retina, with no expression immediately adjacent to the closing optic fissure. Expression is also observed in the dorsal and ventral aspects of the developing forelimb bud and in the developing pharyngeal arches, as well as in the midbrain.

The protein resides in the nucleus. It is found in the cytoplasm. Required for several aspects of embryonic development including normal development of the eye, notochord, neural tube and other organ tissues, and for embryonic turning. This is Protein mab-21-like 2 (Mab21l2) from Mus musculus (Mouse).